Here is a 345-residue protein sequence, read N- to C-terminus: Probable translocation protein y4yO (345 aa).

Residues 1-22 (MSDTSEEKSHGATPKKLSDARK) are compositionally biased toward basic and acidic residues. Residues 1-25 (MSDTSEEKSHGATPKKLSDARKRGQ) are disordered. 3 helical membrane passes run 87-107 (LATVGPLLSALFGAVILAALL), 151-171 (VLVLGGTFSLFFLGLWKTMVY), and 189-209 (QLIGIGAGALLIGGLIDLLLQ).

The protein belongs to the type III secretion exporter family.

It localises to the cell membrane. Could be involved in the secretion of an unknown factor. The chain is Probable translocation protein y4yO from Sinorhizobium fredii (strain NBRC 101917 / NGR234).